Reading from the N-terminus, the 232-residue chain is TIR domain-containing adapter molecule 2 (232 aa).

The span at 1–10 (MGIGKSKMDP) shows a compositional bias: basic and acidic residues. Residues 1-71 (MGIGKSKMDP…VEERPEEDTE (71 aa)) are disordered. A lipid anchor (N-myristoyl glycine) is attached at Gly-2. Polar residues predominate over residues 19-29 (KSQSVDTSQSH). Over residues 30-42 (HMSDSKQSEEISL) the composition is skewed to basic and acidic residues. The segment covering 55–71 (PAEEQEGVEERPEEDTE) has biased composition (acidic residues). A TIR domain is found at 70-226 (TEEEVFLKFV…AIWKETRNTV (157 aa)). The residue at position 164 (Tyr-164) is a Phosphotyrosine.

Homodimer. Interacts with TLR4, TICAM1, IRF3 and IRF7 in response to LPS. Interacts with IL1R1, IL1RAP, IRAK2, IRAK3 and TRAF6. Interacts with protein kinase-inactive mutants of IRAK1 and IRAK4. Isoform 1 interacts with isoform 2; the interaction occurs in late endosomes and disrupts the interaction between isoform 1 and TICAM1. Interacts with MYD88; the interaction decreases after IL-18 stimulation in a time-dependent manner. Interacts with IL18R1 and IL18RAP. Interacts with TLR2. Interacts with RAB11FIP2. In terms of processing, myristoylated. Required for membrane association which is critical for its ability to initiate efficient signaling. Post-translationally, phosphorylated by PRKCE in response to LPS. Phosphorylation is essential for its function. It is depleted from the membrane upon phosphorylation. Tyrosine phosphorylation is inhibited by phosphatase PTPN4.

Its subcellular location is the cytoplasm. It is found in the golgi apparatus. It localises to the cell membrane. The protein localises to the endoplasmic reticulum. The protein resides in the early endosome. Its subcellular location is the late endosome. It is found in the cell projection. It localises to the phagocytic cup. In terms of biological role, functions as a sorting adapter in different signaling pathways to facilitate downstream signaling leading to type I interferon induction. In TLR4 signaling, physically bridges TLR4 and TICAM1 and functionally transmits signal to TICAM1 in early endosomes after endocytosis of TLR4. In TLR2 signaling, physically bridges TLR2 and MYD88 and is required for the TLR2-dependent movement of MYD88 to endosomes following ligand engagement. Involved in IL-18 signaling and is proposed to function as a sorting adapter for MYD88 in IL-18 signaling during adaptive immune response. Forms a complex with RAB11FIP2 that is recruited to the phagosomes to promote the activation of the actin-regulatory GTPases RAC1 and CDC42 and subsequent phagocytosis of Gram-negative bacteria. This Bos taurus (Bovine) protein is TIR domain-containing adapter molecule 2 (TICAM2).